Here is a 470-residue protein sequence, read N- to C-terminus: Argininosuccinate lyase (470 aa).

This sequence belongs to the lyase 1 family. Argininosuccinate lyase subfamily.

It is found in the cytoplasm. It carries out the reaction 2-(N(omega)-L-arginino)succinate = fumarate + L-arginine. It participates in amino-acid biosynthesis; L-arginine biosynthesis; L-arginine from L-ornithine and carbamoyl phosphate: step 3/3. The chain is Argininosuccinate lyase from Mycobacterium leprae (strain Br4923).